A 394-amino-acid chain; its full sequence is Putative bacilysin exporter BacE (394 aa).

The next 11 helical transmembrane spans lie at 11–31 (LLYG…ALLI), 43–63 (SGVI…GVLV), 69–89 (IKIM…LTFL), 92–112 (GEYP…GVFF), 142–162 (IIVG…ELAV), 166–186 (GVTY…FVPI), 215–235 (MFTM…FPIV), 244–264 (IGNF…AALV), 288–308 (LFLF…FFIA), 332–352 (IFSV…MFIN), and 353–373 (ILSA…LFLH).

It belongs to the major facilitator superfamily. Drug:H(+) antiporter-3 (DHA3) (TC 2.A.1.21) family.

The protein localises to the cell membrane. Part of the bacilysin biosynthesis operon. May be involved in self-resistance to bacilysin by permitting efflux of this antibiotic. This is Putative bacilysin exporter BacE (bacE) from Bacillus subtilis (strain 168).